Consider the following 311-residue polypeptide: Olfactory receptor 2M4 (311 aa).

Topologically, residues 1-25 are extracellular; sequence MVWENQTFNSIFILLGIFNHSPTHT. N-linked (GlcNAc...) asparagine glycosylation is present at Asn-5. The helical transmembrane segment at 26–49 threads the bilayer; it reads FLFSLVLGIFSLALMENISMVLLI. At 50 to 57 the chain is on the cytoplasmic side; the sequence is YIEKQLHT. A helical transmembrane segment spans residues 58–79; it reads PMYFLLSQLSLMDLMLICTTLP. The Extracellular segment spans residues 80 to 100; sequence KMIFSYLSGKKSISLAGCGTQ. Cysteines 97 and 189 form a disulfide. A helical membrane pass occupies residues 101 to 120; it reads IFFYVSLLGAECFLLAVMAY. Residues 121–139 are Cytoplasmic-facing; it reads DRYVAICHPLQYTILMNPK. A helical membrane pass occupies residues 140–158; it reads LCVFMTVASWTLGSLDGII. Over 159-195 the chain is Extracellular; the sequence is VLAAVLSFSYCSSLEIHHFFCDVAALLPLSCTETSAF. The chain crosses the membrane as a helical span at residues 196–219; sequence ERLLVICCVVMLIFPVSVIILSYS. Topologically, residues 220-236 are cytoplasmic; it reads HVLRAVIHMGSGESRRK. A helical transmembrane segment spans residues 237–259; that stretch reads AFTTCSSHLSVVGLYYGAAMFMY. The Extracellular segment spans residues 260 to 272; it reads MRPASKHTPDQDK. Residues 273–292 traverse the membrane as a helical segment; sequence MVSAFYTILTPMLNPLIYSL. Over 293–311 the chain is Cytoplasmic; it reads RNKEVFRALQKVLKKRKLI.

It belongs to the G-protein coupled receptor 1 family.

The protein localises to the cell membrane. Its function is as follows. Odorant receptor. The chain is Olfactory receptor 2M4 (OR2M4) from Homo sapiens (Human).